The sequence spans 210 residues: Redox-sensing transcriptional repressor Rex (210 aa).

Positions 17–56 (KYHRYLNELMKNDVDRISSKELGEKIGFTASQIRQDLNCF) form a DNA-binding region, H-T-H motif. Residue 91 to 96 (GAGNIG) coordinates NAD(+).

Belongs to the transcriptional regulatory Rex family. Homodimer.

The protein resides in the cytoplasm. In terms of biological role, modulates transcription in response to changes in cellular NADH/NAD(+) redox state. This Clostridium botulinum (strain Eklund 17B / Type B) protein is Redox-sensing transcriptional repressor Rex.